The primary structure comprises 115 residues: MARVKRGNIARKRRNKILNLAKGFRGGNKNLFRTANQRVMKALCNAYRDRRRRKRDFRRLWISRINASARINGTNYSKLINGMKNSEIIINRKMLAQLALNDPKCFEKIVSSVSN.

Belongs to the bacterial ribosomal protein bL20 family.

Its function is as follows. Binds directly to 23S ribosomal RNA and is necessary for the in vitro assembly process of the 50S ribosomal subunit. It is not involved in the protein synthesizing functions of that subunit. The sequence is that of Large ribosomal subunit protein bL20 from Prochlorococcus marinus (strain MIT 9312).